The following is an 85-amino-acid chain: Protein C4 (85 aa).

Residue Gly-2 is the site of N-myristoyl glycine; by host attachment. Positions Leu-42–Arg-65 are disordered. Low complexity predominate over residues Pro-44 to Ser-59.

This sequence belongs to the geminiviridae protein AC4/C4 family.

The protein resides in the host cell membrane. In terms of biological role, pathogenicity determinant. May act as a suppressor of RNA-mediated gene silencing, also known as post-transcriptional gene silencing (PTGS), a mechanism of plant viral defense that limits the accumulation of viral RNAs. This chain is Protein C4, found in Solanum lycopersicum (Tomato).